Here is a 247-residue protein sequence, read N- to C-terminus: Probable transcriptional regulatory protein TDE_1487 (247 aa).

It belongs to the TACO1 family.

It localises to the cytoplasm. The polypeptide is Probable transcriptional regulatory protein TDE_1487 (Treponema denticola (strain ATCC 35405 / DSM 14222 / CIP 103919 / JCM 8153 / KCTC 15104)).